A 185-amino-acid polypeptide reads, in one-letter code: Disulfide bond formation protein B (185 aa).

Over 1–25 (MLLFFVILGIFVLTILKAISKQRWS) the chain is Cytoplasmic. Residues 26-42 (WLLLAASALSLELSALY) traverse the membrane as a helical segment. Residues 43–60 (FQHVMQLEPCVMCVYERL) are Periplasmic-facing. An intrachain disulfide couples Cys-52 to Cys-55. The helical transmembrane segment at 61–76 (AMLGILLAGLIGASSP) threads the bilayer. At 77–83 (NNVFIRL) the chain is on the cytoplasmic side. The chain crosses the membrane as a helical span at residues 84 to 101 (SAFLLWGISAVWGILLAI). Residues 102–156 (KHTDYQLHPSPFFTCDFFPNFPAWAPLHEWLPWLFNPTGDCSDIVWQFLGYSMPQ) lie on the Periplasmic side of the membrane. A disulfide bridge connects residues Cys-116 and Cys-142. A helical membrane pass occupies residues 157–175 (WLIVSFSLYTLLFIIFAIS). Residues 176-185 (AVLKTKKQLF) are Cytoplasmic-facing.

It belongs to the DsbB family.

Its subcellular location is the cell inner membrane. Functionally, required for disulfide bond formation in some periplasmic proteins. Acts by oxidizing the DsbA protein. The chain is Disulfide bond formation protein B from Psychromonas ingrahamii (strain DSM 17664 / CCUG 51855 / 37).